Here is an 874-residue protein sequence, read N- to C-terminus: Protein Son (874 aa).

Disordered stretches follow at residues 1-45 (MTEN…ERPD), 68-98 (RRSN…NIKP), and 120-368 (ELLD…SRDL). Over residues 12 to 24 (ETPQVAGSQTNPP) the composition is skewed to polar residues. Over residues 70–89 (SNSNELGNNDESGESESSAS) the composition is skewed to low complexity. Basic residues-rich tracts occupy residues 128 to 147 (KKKK…KKKT) and 162 to 175 (KHKH…HKDI). 2 stretches are compositionally biased toward basic and acidic residues: residues 176–219 (RVKD…KDKF) and 226–277 (SEKE…ERVR). Residues 705 to 751 (TGGMGMALLQKMGWKPGEGLGRCKTGSLQPLLLDVKLDKRGLVSRDD) enclose the G-patch domain. Residues 800–870 (HPVCVLNELT…AALCLRSLGI (71 aa)) form the DRBM domain.

Expressed in ovarian nurse cells (at protein level).

Its subcellular location is the nucleus. Its function is as follows. RNA-binding protein that protects nascent transcripts containing intronic transposable sequences, known as INE-1, from being degraded by DIP1. Modulates DIP1 activity by repressing its sumoylation levels. This ensures that intronic sequences will be degradated only after splicing. In the ovaries, regulates germline stem cells (GSCs) self-renewal by repressing the expression of the GSC differentiation-promoting factor Rga. The chain is Protein Son from Drosophila melanogaster (Fruit fly).